Consider the following 119-residue polypeptide: Beta-2-microglobulin (119 aa).

The first 20 residues, methionine 1–alanine 20, serve as a signal peptide directing secretion. Positions proline 25 to lysine 114 constitute an Ig-like C1-type domain. A disulfide bridge links cysteine 45 with cysteine 100.

This sequence belongs to the beta-2-microglobulin family. Heterodimer of an alpha chain and a beta chain. Beta-2-microglobulin is the beta-chain of major histocompatibility complex class I molecules.

It localises to the secreted. Functionally, component of the class I major histocompatibility complex (MHC). Involved in the presentation of peptide antigens to the immune system. This Leontopithecus chrysopygus (Golden-rumped lion tamarin) protein is Beta-2-microglobulin (B2M).